Reading from the N-terminus, the 297-residue chain is 4-hydroxy-tetrahydrodipicolinate synthase (297 aa).

Thr45 is a pyruvate binding site. The active-site Proton donor/acceptor is the Tyr133. Lys161 acts as the Schiff-base intermediate with substrate in catalysis. Ile203 contacts pyruvate.

The protein belongs to the DapA family. In terms of assembly, homotetramer; dimer of dimers.

It is found in the cytoplasm. It carries out the reaction L-aspartate 4-semialdehyde + pyruvate = (2S,4S)-4-hydroxy-2,3,4,5-tetrahydrodipicolinate + H2O + H(+). The protein operates within amino-acid biosynthesis; L-lysine biosynthesis via DAP pathway; (S)-tetrahydrodipicolinate from L-aspartate: step 3/4. Functionally, catalyzes the condensation of (S)-aspartate-beta-semialdehyde [(S)-ASA] and pyruvate to 4-hydroxy-tetrahydrodipicolinate (HTPA). The sequence is that of 4-hydroxy-tetrahydrodipicolinate synthase from Buchnera aphidicola subsp. Cinara cedri (strain Cc).